A 244-amino-acid chain; its full sequence is Complement C1q subcomponent subunit A (244 aa).

The signal sequence occupies residues Met-1–Thr-22. The tract at residues Ala-28 to Ala-94 is disordered. The 79-residue stretch at Gly-31–Ile-109 folds into the Collagen-like domain. 2 positions are modified to 4-hydroxyproline: Pro-39 and Pro-45. Position 48 is a 5-hydroxylysine (Lys-48). O-linked (Gal...) hydroxylysine glycosylation occurs at Lys-48. A 4-hydroxyproline mark is found at Pro-54 and Pro-57. At Lys-67 the chain carries 5-hydroxylysine. The O-linked (Gal...) hydroxylysine glycan is linked to Lys-67. 3 positions are modified to 4-hydroxyproline: Pro-73, Pro-79, and Pro-85. The segment covering Pro-79 to Ala-94 has biased composition (low complexity). 5-hydroxylysine is present on Lys-100. Lys-100 carries O-linked (Gal...) hydroxylysine glycosylation. One can recognise a C1q domain in the interval Lys-110–Ala-244. N-linked (GlcNAc...) asparagine glycosylation is present at Asn-146. Cys-172 and Cys-189 are joined by a disulfide. Residue Gln-198 coordinates Ca(2+).

Core component of the complement C1 complex, a calcium-dependent complex composed of 1 molecule of the C1Q subcomplex, 2 molecules of C1R and 2 molecules of C1S. The C1Q subcomplex is composed 18 subunits: 3 chains of C1QA, C1QB, and C1QC trimerize to form 6 collagen-like triple helices connected to six globular ligand-recognition modules (C1q domain). Interacts with CR1 (via Sushi 24 and Sushi 25 domains). Interacts (via C-terminus) with CD33; this interaction activates CD33 inhibitory motifs. In terms of processing, O-linked glycans are assumed to be the Glc-Gal disaccharides typically found as secondary modifications of hydroxylated lysines in collagen-like domains.

Its subcellular location is the secreted. It is found in the cell surface. Its activity is regulated as follows. The C1Q subcomplex is inhibited by sulfated molecules, such as triterpenoid sulfates, heparan sulfate, or chondroitin sulfates. In terms of biological role, core component of the complement C1 complex, a multiprotein complex that initiates the classical pathway of the complement system, a cascade of proteins that leads to phagocytosis and breakdown of pathogens and signaling that strengthens the adaptive immune system. The classical complement pathway is initiated by the C1Q subcomplex of the C1 complex, which specifically binds IgG or IgM immunoglobulins complexed with antigens, forming antigen-antibody complexes on the surface of pathogens: C1QA, together with C1QB and C1QC, specifically recognizes and binds the Fc regions of IgG or IgM via its C1q domain. Immunoglobulin-binding activates the proenzyme C1R, which cleaves C1S, initiating the proteolytic cascade of the complement system. The C1Q subcomplex is activated by a hexamer of IgG complexed with antigens, while it is activated by a pentameric IgM. The C1Q subcomplex also recognizes and binds phosphatidylserine exposed on the surface of cells undergoing programmed cell death, possibly promoting activation of the complement system. The protein is Complement C1q subcomponent subunit A (C1QA) of Bos taurus (Bovine).